A 207-amino-acid chain; its full sequence is High frequency lysogenization protein HflD homolog (207 aa).

The protein belongs to the HflD family.

It is found in the cytoplasm. It localises to the cell inner membrane. The sequence is that of High frequency lysogenization protein HflD homolog from Teredinibacter turnerae (strain ATCC 39867 / T7901).